A 255-amino-acid chain; its full sequence is Imidazole glycerol phosphate synthase subunit HisF (255 aa).

Residues Asp12 and Asp131 contribute to the active site.

Belongs to the HisA/HisF family. As to quaternary structure, heterodimer of HisH and HisF.

It is found in the cytoplasm. The catalysed reaction is 5-[(5-phospho-1-deoxy-D-ribulos-1-ylimino)methylamino]-1-(5-phospho-beta-D-ribosyl)imidazole-4-carboxamide + L-glutamine = D-erythro-1-(imidazol-4-yl)glycerol 3-phosphate + 5-amino-1-(5-phospho-beta-D-ribosyl)imidazole-4-carboxamide + L-glutamate + H(+). It functions in the pathway amino-acid biosynthesis; L-histidine biosynthesis; L-histidine from 5-phospho-alpha-D-ribose 1-diphosphate: step 5/9. Functionally, IGPS catalyzes the conversion of PRFAR and glutamine to IGP, AICAR and glutamate. The HisF subunit catalyzes the cyclization activity that produces IGP and AICAR from PRFAR using the ammonia provided by the HisH subunit. The chain is Imidazole glycerol phosphate synthase subunit HisF from Salinispora arenicola (strain CNS-205).